A 149-amino-acid chain; its full sequence is Oligosaccharyltransferase complex subunit OSTC (149 aa).

The Cytoplasmic portion of the chain corresponds to 1-32; the sequence is METLYRVPFLVLECPNLKLKKPPWLHMPSAMT. Residues 33 to 53 form a helical membrane-spanning segment; sequence VYALVVVSYFLITGGIIYDVI. Residues 54–83 lie on the Extracellular side of the membrane; the sequence is VEPPSVGSMTDEHGHQRPVAFLAYRVNGQY. The chain crosses the membrane as a helical span at residues 84 to 104; sequence IMEGLASSFLFTMGGLGFIIL. The Cytoplasmic segment spans residues 105 to 117; the sequence is DRSNAPNIPKLNR. The chain crosses the membrane as a helical span at residues 118 to 138; that stretch reads FLLLFIGFVCVLLSFFMARVF. Topologically, residues 139–149 are extracellular; the sequence is MRMKLPGYLMG.

Belongs to the OSTC family. Component of STT3A-containing oligosaccharyl transferase (OST-A) complex. STT3A-containing complex assembly occurs through the formation of 3 subcomplexes. Subcomplex 1 contains RPN1 and TMEM258, subcomplex 2 contains the STT3A-specific subunits STT3A, DC2/OSTC, and KCP2 as well as the core subunit OST4, and subcomplex 3 contains RPN2, DAD1, and OST48. The OST-A complex can form stable complexes with the Sec61 complex or with both the Sec61 and TRAP complexes. Interacts with PSEN1 and NCSTN; indicative for an association with the gamma-secretase complex.

It is found in the endoplasmic reticulum. It localises to the membrane. It participates in protein modification; protein glycosylation. In terms of biological role, subunit of STT3A-containing oligosaccharyl transferase (OST-A) complex that catalyzes the initial transfer of a defined glycan (Glc(3)Man(9)GlcNAc(2) in eukaryotes) from the lipid carrier dolichol-pyrophosphate to an asparagine residue within an Asn-X-Ser/Thr consensus motif in nascent polypeptide chains, the first step in protein N-glycosylation. N-glycosylation occurs cotranslationally and the complex associates with the Sec61 complex at the channel-forming translocon complex that mediates protein translocation across the endoplasmic reticulum (ER). Within the OST-A complex, acts as an adapter that anchors the OST-A complex to the Sec61 complex. May be involved in N-glycosylation of APP (amyloid-beta precursor protein). Can modulate gamma-secretase cleavage of APP by enhancing endoprotelysis of PSEN1. This Homo sapiens (Human) protein is Oligosaccharyltransferase complex subunit OSTC.